Consider the following 176-residue polypeptide: Disulfide bond formation protein B (176 aa).

Topologically, residues 1–13 are cytoplasmic; it reads MQFLNTFSKSRIS. A helical membrane pass occupies residues 14–30; it reads WLLLLLCIVFFEGSALF. The Periplasmic segment spans residues 31-48; the sequence is FQHGMKLGPCVMCIYERV. An intrachain disulfide couples Cys40 to Cys43. Residues 49 to 64 traverse the membrane as a helical segment; sequence AMMGIAFAALLGAIAP. Over 65–71 the chain is Cytoplasmic; that stretch reads QYAIIRW. A helical membrane pass occupies residues 72–89; sequence AGLIAWGYSAVRGLQLSI. Over 90–144 the chain is Periplasmic; it reads EHVGYQFNPSPFATCDLFVQFPNWAPLNKWVPWMFEAYGNCAEVVWTFLGQSMPQ. A disulfide bridge connects residues Cys104 and Cys130. A helical transmembrane segment spans residues 145-163; it reads WLVIIFAGNLVALALIVIA. At 164–176 the chain is on the cytoplasmic side; it reads QFFSKKTNTILDM.

Belongs to the DsbB family.

The protein localises to the cell inner membrane. In terms of biological role, required for disulfide bond formation in some periplasmic proteins. Acts by oxidizing the DsbA protein. The polypeptide is Disulfide bond formation protein B (Photobacterium profundum (strain SS9)).